The following is a 151-amino-acid chain: Exosporium protein B (151 aa).

It is found in the spore wall. The polypeptide is Exosporium protein B (Clostridium sporogenes (strain ATCC 15579)).